The sequence spans 453 residues: Cysteine desulfurase, mitochondrial (453 aa).

The transit peptide at 1 to 34 (MASKVISATIRRTLTKPHGTFSRCRYLSTAAAAT) directs the protein to the mitochondrion. Pyridoxal 5'-phosphate-binding positions include 123 to 124 (AT), Asn-203, Gln-231, and 251 to 253 (SAH). Lys-254 bears the N6-(pyridoxal phosphate)lysine mark. Thr-291 contributes to the pyridoxal 5'-phosphate binding site. The Cysteine persulfide intermediate role is filled by Cys-377. Cys-377 lines the [2Fe-2S] cluster pocket.

This sequence belongs to the class-V pyridoxal-phosphate-dependent aminotransferase family. NifS/IscS subfamily. In terms of assembly, interacts with FH. Interacts with SUFE1. The cofactor is pyridoxal 5'-phosphate.

Its subcellular location is the mitochondrion. It carries out the reaction (sulfur carrier)-H + L-cysteine = (sulfur carrier)-SH + L-alanine. Its activity is regulated as follows. Threefold increase in the catalytic activity in the presence of FH (frataxin). 30-fold increase in the catalytic activity in the presence of SUFE1. Its function is as follows. Catalyzes the removal of elemental sulfur from cysteine to produce alanine. Supplies the inorganic sulfur for iron-sulfur (Fe-S) clusters. The polypeptide is Cysteine desulfurase, mitochondrial (Arabidopsis thaliana (Mouse-ear cress)).